The following is a 396-amino-acid chain: Proteasome-activating nucleotidase (396 aa).

Positions 16–57 (ITYLKRRIRQLELQVRMLEADKERLERELSRLRSEMSRLRQP) form a coiled coil. Residues 181–186 (GCGKTL) and histidine 320 contribute to the ATP site. Positions 394–396 (IYG) are docks into pockets in the proteasome alpha-ring to cause gate opening.

The protein belongs to the AAA ATPase family. Homohexamer. The hexameric complex has a two-ring architecture resembling a top hat that caps the 20S proteasome core at one or both ends. Upon ATP-binding, the C-terminus of PAN interacts with the alpha-rings of the proteasome core by binding to the intersubunit pockets.

It is found in the cytoplasm. In terms of biological role, ATPase which is responsible for recognizing, binding, unfolding and translocation of substrate proteins into the archaeal 20S proteasome core particle. Is essential for opening the gate of the 20S proteasome via an interaction with its C-terminus, thereby allowing substrate entry and access to the site of proteolysis. Thus, the C-termini of the proteasomal ATPase function like a 'key in a lock' to induce gate opening and therefore regulate proteolysis. Unfolding activity requires energy from ATP hydrolysis, whereas ATP binding alone promotes ATPase-20S proteasome association which triggers gate opening, and supports translocation of unfolded substrates. The chain is Proteasome-activating nucleotidase from Pyrococcus abyssi (strain GE5 / Orsay).